The following is a 231-amino-acid chain: Aquaporin Z (231 aa).

The next 2 helical transmembrane spans lie at 9 to 29 (LLGT…AAAF) and 34 to 54 (IGFV…IYAV). The NPA 1 motif lies at 63 to 65 (NPA). A run of 3 helical transmembrane segments spans residues 82–102 (IPYI…LYVI), 133–153 (SAIV…IGAT), and 160–180 (GFAP…SIPI). The NPA 2 signature appears at 186-188 (NPA). Residues 202–222 (LEQLWFFWVMPIIGGIVGGGI) form a helical membrane-spanning segment.

The protein belongs to the MIP/aquaporin (TC 1.A.8) family. Homotetramer.

It localises to the cell inner membrane. The catalysed reaction is H2O(in) = H2O(out). Functionally, channel that permits osmotically driven movement of water in both directions. It is involved in the osmoregulation and in the maintenance of cell turgor during volume expansion in rapidly growing cells. It mediates rapid entry or exit of water in response to abrupt changes in osmolarity. This chain is Aquaporin Z, found in Photorhabdus laumondii subsp. laumondii (strain DSM 15139 / CIP 105565 / TT01) (Photorhabdus luminescens subsp. laumondii).